Consider the following 284-residue polypeptide: Bifunctional protein FolD (284 aa).

NADP(+)-binding positions include glycine 166–serine 168 and isoleucine 232.

The protein belongs to the tetrahydrofolate dehydrogenase/cyclohydrolase family. In terms of assembly, homodimer.

The enzyme catalyses (6R)-5,10-methylene-5,6,7,8-tetrahydrofolate + NADP(+) = (6R)-5,10-methenyltetrahydrofolate + NADPH. It catalyses the reaction (6R)-5,10-methenyltetrahydrofolate + H2O = (6R)-10-formyltetrahydrofolate + H(+). It functions in the pathway one-carbon metabolism; tetrahydrofolate interconversion. Its function is as follows. Catalyzes the oxidation of 5,10-methylenetetrahydrofolate to 5,10-methenyltetrahydrofolate and then the hydrolysis of 5,10-methenyltetrahydrofolate to 10-formyltetrahydrofolate. In Buchnera aphidicola subsp. Cinara cedri (strain Cc), this protein is Bifunctional protein FolD.